We begin with the raw amino-acid sequence, 1303 residues long: Phosphoribosylformylglycinamidine synthase (1303 aa).

ATP is bound by residues 308–319 and Ala-679; that span reads GASTGSGGEIRD. Positions 719, 723, and 892 each coordinate Mg(2+). Positions 1003–1023 are disordered; that stretch reads LRDNPACADQEHEAKKDNSDP. Over residues 1011–1021 the composition is skewed to basic and acidic residues; the sequence is DQEHEAKKDNS. Residues 1050–1303 enclose the Glutamine amidotransferase type-1 domain; the sequence is MAILREQGVN…MFQNARKNIG (254 aa). The active-site Nucleophile is Cys-1143. Active-site residues include His-1268 and Glu-1270.

In the N-terminal section; belongs to the FGAMS family. As to quaternary structure, monomer.

The protein resides in the cytoplasm. It carries out the reaction N(2)-formyl-N(1)-(5-phospho-beta-D-ribosyl)glycinamide + L-glutamine + ATP + H2O = 2-formamido-N(1)-(5-O-phospho-beta-D-ribosyl)acetamidine + L-glutamate + ADP + phosphate + H(+). The protein operates within purine metabolism; IMP biosynthesis via de novo pathway; 5-amino-1-(5-phospho-D-ribosyl)imidazole from N(2)-formyl-N(1)-(5-phospho-D-ribosyl)glycinamide: step 1/2. Functionally, phosphoribosylformylglycinamidine synthase involved in the purines biosynthetic pathway. Catalyzes the ATP-dependent conversion of formylglycinamide ribonucleotide (FGAR) and glutamine to yield formylglycinamidine ribonucleotide (FGAM) and glutamate. The chain is Phosphoribosylformylglycinamidine synthase from Aliivibrio fischeri (strain ATCC 700601 / ES114) (Vibrio fischeri).